The primary structure comprises 420 residues: Acetylornithine aminotransferase (420 aa).

Pyridoxal 5'-phosphate-binding positions include G118–A119 and F151. R154 is a N(2)-acetyl-L-ornithine binding site. Position 242-245 (D242–Q245) interacts with pyridoxal 5'-phosphate. K271 carries the N6-(pyridoxal phosphate)lysine modification. S298 provides a ligand contact to N(2)-acetyl-L-ornithine. T299 contributes to the pyridoxal 5'-phosphate binding site.

This sequence belongs to the class-III pyridoxal-phosphate-dependent aminotransferase family. ArgD subfamily. In terms of assembly, homodimer. Requires pyridoxal 5'-phosphate as cofactor.

Its subcellular location is the cytoplasm. The catalysed reaction is N(2)-acetyl-L-ornithine + 2-oxoglutarate = N-acetyl-L-glutamate 5-semialdehyde + L-glutamate. The protein operates within amino-acid biosynthesis; L-arginine biosynthesis; N(2)-acetyl-L-ornithine from L-glutamate: step 4/4. The polypeptide is Acetylornithine aminotransferase (Parasynechococcus marenigrum (strain WH8102)).